Reading from the N-terminus, the 189-residue chain is UPF0301 protein RMA_0049 (189 aa).

It belongs to the UPF0301 (AlgH) family.

The chain is UPF0301 protein RMA_0049 from Rickettsia massiliae (strain Mtu5).